The chain runs to 307 residues: Mediator of RNA polymerase II transcription subunit 18 (307 aa).

The span at 117–126 (TNFNSTNEDQ) shows a compositional bias: polar residues. The tract at residues 117–162 (TNFNSTNEDQNNSKHTEDTVNESRNSDDIIDVDMDASPAPSNESCS) is disordered.

This sequence belongs to the Mediator complex subunit 18 family. Component of the Mediator complex, which is composed of at least 21 subunits that form three structurally distinct submodules. The Mediator head module contains MED6, MED8, MED11, SRB4/MED17, SRB5/MED18, ROX3/MED19, SRB2/MED20 and SRB6/MED22, the middle module contains MED1, MED4, NUT1/MED5, MED7, CSE2/MED9, NUT2/MED10, SRB7/MED21 and SOH1/MED31, and the tail module contains MED2, PGD1/MED3, RGR1/MED14, GAL11/MED15 and SIN4/MED16. The head and the middle modules interact directly with RNA polymerase II, whereas the elongated tail module interacts with gene-specific regulatory proteins. SRB5/MED18 interacts directly with MED8 and SRB2/MED20.

Its subcellular location is the nucleus. In terms of biological role, component of the Mediator complex, a coactivator involved in the regulated transcription of nearly all RNA polymerase II-dependent genes. Mediator functions as a bridge to convey information from gene-specific regulatory proteins to the basal RNA polymerase II transcription machinery. The Mediator complex, having a compact conformation in its free form, is recruited to promoters by direct interactions with regulatory proteins and serves for the assembly of a functional preinitiation complex with RNA polymerase II and the general transcription factors. The Mediator complex unfolds to an extended conformation and partially surrounds RNA polymerase II, specifically interacting with the unphosphorylated form of the C-terminal domain (CTD) of RNA polymerase II. The Mediator complex dissociates from the RNA polymerase II holoenzyme and stays at the promoter when transcriptional elongation begins. This Saccharomyces cerevisiae (strain ATCC 204508 / S288c) (Baker's yeast) protein is Mediator of RNA polymerase II transcription subunit 18 (SRB5).